Reading from the N-terminus, the 545-residue chain is MTLLTQSSTWQALSAHSKNVPHMRELFATDTARFNKMSLSACGLLLDYSKNRATAETLDLLFALASNSQLEAKIKAMFAGEIINTTEKRAVLHTALRSTAEQSIIAEGQDIVPEVQQTLNKMQGFVSSVTSGQWKGYTGKAITDIVSIGIGGSFLGPKIVSQALRPYWNPELKCHFVANVDGTSISEKLKLLDPETTLFIMSSKSFGTQETLTNTLTAREWFLAKGGLQSDVAKHFVAVTSNVAKATDFGIDADNIFPMWDWVGGRYSLWSAIGLPIALLIGMDNFRALLSGAHQMDEHFANAPLTENMPVIMGLLSLWYGNFFNAQSNVVLTYDHYLRGLPAYFQQLDMESNGKSVTLNGTAVDYSTGPVIWGGEGTNGQHAYHQLLHQGTALIPADFIMPLQSHNPIGEHHDQLASNCFGQTQALMQGRTFDEALAELANSALSATEKQLIAKHKVMPGNKPSNTLLMDKLTPSTLGALIALYEHRTFVQGAIWDINSFDQWGVELGKDLGNDVLTRIGASQDCDALDASSNALINLYRQGKI.

Glutamate 351 functions as the Proton donor in the catalytic mechanism. Active-site residues include histidine 382 and lysine 510.

The protein belongs to the GPI family.

The protein resides in the cytoplasm. The catalysed reaction is alpha-D-glucose 6-phosphate = beta-D-fructose 6-phosphate. It participates in carbohydrate biosynthesis; gluconeogenesis. Its pathway is carbohydrate degradation; glycolysis; D-glyceraldehyde 3-phosphate and glycerone phosphate from D-glucose: step 2/4. Functionally, catalyzes the reversible isomerization of glucose-6-phosphate to fructose-6-phosphate. The sequence is that of Glucose-6-phosphate isomerase from Shewanella baltica (strain OS223).